We begin with the raw amino-acid sequence, 387 residues long: Exodeoxyribonuclease 7 large subunit (387 aa).

It belongs to the XseA family. As to quaternary structure, heterooligomer composed of large and small subunits.

It localises to the cytoplasm. It carries out the reaction Exonucleolytic cleavage in either 5'- to 3'- or 3'- to 5'-direction to yield nucleoside 5'-phosphates.. Its function is as follows. Bidirectionally degrades single-stranded DNA into large acid-insoluble oligonucleotides, which are then degraded further into small acid-soluble oligonucleotides. In Campylobacter jejuni subsp. jejuni serotype O:23/36 (strain 81-176), this protein is Exodeoxyribonuclease 7 large subunit.